Consider the following 502-residue polypeptide: UPF0371 protein CLD_0424 (502 aa).

It belongs to the UPF0371 family.

The chain is UPF0371 protein CLD_0424 from Clostridium botulinum (strain Okra / Type B1).